A 114-amino-acid polypeptide reads, in one-letter code: Nucleoid-associated protein Clos_2855 (114 aa).

Belongs to the YbaB/EbfC family. In terms of assembly, homodimer.

It localises to the cytoplasm. The protein localises to the nucleoid. Binds to DNA and alters its conformation. May be involved in regulation of gene expression, nucleoid organization and DNA protection. The sequence is that of Nucleoid-associated protein Clos_2855 from Alkaliphilus oremlandii (strain OhILAs) (Clostridium oremlandii (strain OhILAs)).